A 35-amino-acid chain; its full sequence is Conotoxin Cal6.1g (35 aa).

The propeptide occupies 1–8; the sequence is GLSRPSKR. 3 disulfides stabilise this stretch: cysteine 9–cysteine 25, cysteine 16–cysteine 29, and cysteine 24–cysteine 34.

This sequence belongs to the conotoxin O1 superfamily. As to expression, expressed by the venom duct.

It localises to the secreted. Its function is as follows. Probable neurotoxin with unknown target. Possibly targets ion channels. This is Conotoxin Cal6.1g from Californiconus californicus (California cone).